The primary structure comprises 321 residues: GDP-L-fucose synthase (321 aa).

Position 14 to 20 (14 to 20) interacts with NADP(+); the sequence is GGSGLVG. Tyr-143 functions as the Proton donor/acceptor in the catalytic mechanism. NADP(+)-binding positions include Lys-147, 170–173, and His-186; that span reads PTNV. Substrate-binding residues include Lys-194, Trp-208, Arg-215, and Asp-277.

The protein belongs to the NAD(P)-dependent epimerase/dehydratase family. Fucose synthase subfamily. Homodimer.

The enzyme catalyses GDP-beta-L-fucose + NADP(+) = GDP-4-dehydro-alpha-D-rhamnose + NADPH + H(+). Its pathway is nucleotide-sugar biosynthesis; GDP-L-fucose biosynthesis via de novo pathway; GDP-L-fucose from GDP-alpha-D-mannose: step 2/2. Functionally, catalyzes the two-step NADP-dependent conversion of GDP-4-dehydro-6-deoxy-D-mannose to GDP-fucose, involving an epimerase and a reductase reaction. The protein is GDP-L-fucose synthase (GFUS) of Pongo abelii (Sumatran orangutan).